Reading from the N-terminus, the 29-residue chain is Dermaseptin-9TR (29 aa).

In terms of tissue distribution, expressed by the skin glands.

Its subcellular location is the secreted. Functionally, has antimicrobial activity. The protein is Dermaseptin-9TR of Phyllomedusa trinitatis (Trinidad leaf frog).